Here is a 73-residue protein sequence, read N- to C-terminus: Putative antimicrobial peptide clone 4 (73 aa).

A signal peptide spans 1–22 (MQMKYLIPIFFLVLIVADHCHA). Positions 45 to 73 (DITSQIEQYRNLQKREAELEDILANLPVY) are excised as a propeptide.

Belongs to the non-disulfide-bridged peptide (NDBP) superfamily. Short antimicrobial peptide (group 4) family. As to expression, expressed by the venom gland.

The protein localises to the secreted. In terms of biological role, antimicrobial peptide. Has a high antibacterial activity against the Gram-positive bacterium S.aureus (MIC=5-17.30 uM), the methicillin-resistant S.aureus (MRSA) (MIC=17.30 uM), and E.faecalis (MIC=69.23 uM). Has antifungal activity against Candida spp. and one Cryptococcus neoformans strains with MICs values ranging from 6.25 to 100 uM. Also shows an inhibitory activity on C.albicans biofilms at high concentrations. Has a moderate hemolytic potency (18% at 20 uM). Also inhibits the growth of the five cancer cell lines tested. In the model of polymicrobial sepsis, it exhibits an antibiotic effect, reducing the levels of microorganisms in the infectious focus and the inflammatory responses in the lung and cecum of septic animals. The sequence is that of Putative antimicrobial peptide clone 4 from Tityus costatus (Brazilian scorpion).